The primary structure comprises 306 residues: Ribonuclease Z (306 aa).

Zn(2+)-binding residues include histidine 63, histidine 65, aspartate 67, histidine 68, histidine 141, aspartate 211, and histidine 269. Residue aspartate 67 is the Proton acceptor of the active site.

This sequence belongs to the RNase Z family. Homodimer. The cofactor is Zn(2+).

It catalyses the reaction Endonucleolytic cleavage of RNA, removing extra 3' nucleotides from tRNA precursor, generating 3' termini of tRNAs. A 3'-hydroxy group is left at the tRNA terminus and a 5'-phosphoryl group is left at the trailer molecule.. Its function is as follows. Zinc phosphodiesterase, which displays some tRNA 3'-processing endonuclease activity. Probably involved in tRNA maturation, by removing a 3'-trailer from precursor tRNA. The chain is Ribonuclease Z from Staphylococcus haemolyticus (strain JCSC1435).